Consider the following 162-residue polypeptide: Phosphopantetheine adenylyltransferase (162 aa).

Residue T9 participates in substrate binding. ATP contacts are provided by residues 9–10 (TF) and H17. Positions 41, 73, and 87 each coordinate substrate. ATP is bound by residues 88 to 90 (GLR), E98, and 123 to 129 (LSYISSS).

This sequence belongs to the bacterial CoaD family. Homohexamer. Requires Mg(2+) as cofactor.

The protein localises to the cytoplasm. It catalyses the reaction (R)-4'-phosphopantetheine + ATP + H(+) = 3'-dephospho-CoA + diphosphate. It participates in cofactor biosynthesis; coenzyme A biosynthesis; CoA from (R)-pantothenate: step 4/5. Its function is as follows. Reversibly transfers an adenylyl group from ATP to 4'-phosphopantetheine, yielding dephospho-CoA (dPCoA) and pyrophosphate. The polypeptide is Phosphopantetheine adenylyltransferase (Teredinibacter turnerae (strain ATCC 39867 / T7901)).